The primary structure comprises 141 residues: U-scoloptoxin(17)-Er3a (141 aa).

Positions 1–21 (MKSTFALVFGILMVIAHLSFA) are cleaved as a signal peptide.

The protein belongs to the scoloptoxin-17 family. Contains 3 disulfide bonds. In terms of tissue distribution, expressed by the venom gland.

The protein localises to the secreted. This Ethmostigmus rubripes (Giant centipede) protein is U-scoloptoxin(17)-Er3a.